A 290-amino-acid chain; its full sequence is Acetyl-coenzyme A carboxylase carboxyl transferase subunit beta (290 aa).

Positions 27–290 (LWVKCPSCEA…LQRQPADALA (264 aa)) constitute a CoA carboxyltransferase N-terminal domain. Residues cysteine 31, cysteine 34, cysteine 50, and cysteine 53 each coordinate Zn(2+). The segment at 31-53 (CPSCEAVLYRNDVDANLHVCPKC) adopts a C4-type zinc-finger fold.

The protein belongs to the AccD/PCCB family. Acetyl-CoA carboxylase is a heterohexamer composed of biotin carboxyl carrier protein (AccB), biotin carboxylase (AccC) and two subunits each of ACCase subunit alpha (AccA) and ACCase subunit beta (AccD). Requires Zn(2+) as cofactor.

Its subcellular location is the cytoplasm. The catalysed reaction is N(6)-carboxybiotinyl-L-lysyl-[protein] + acetyl-CoA = N(6)-biotinyl-L-lysyl-[protein] + malonyl-CoA. It participates in lipid metabolism; malonyl-CoA biosynthesis; malonyl-CoA from acetyl-CoA: step 1/1. Component of the acetyl coenzyme A carboxylase (ACC) complex. Biotin carboxylase (BC) catalyzes the carboxylation of biotin on its carrier protein (BCCP) and then the CO(2) group is transferred by the transcarboxylase to acetyl-CoA to form malonyl-CoA. The sequence is that of Acetyl-coenzyme A carboxylase carboxyl transferase subunit beta from Burkholderia cenocepacia (strain ATCC BAA-245 / DSM 16553 / LMG 16656 / NCTC 13227 / J2315 / CF5610) (Burkholderia cepacia (strain J2315)).